The primary structure comprises 610 residues: E3 ubiquitin-protein ligase hrd-1 (610 aa).

An N-terminal signal peptide occupies residues 1–23; it reads MRVSAGLMIGGSCVATAATILNA. Residues 24-41 are Lumenal-facing; sequence FLINKQFYPSIVYLSKSN. Residues 42–62 form a helical membrane-spanning segment; the sequence is ASMAVIYVQGIVLVYLMFQLL. Residues 63–99 are Cytoplasmic-facing; it reads KSILFGDLRAAEAEHLSERTWHAVLETCLAFTVFRDD. The helical transmembrane segment at 100–120 threads the bilayer; it reads FSAIFVMQFIGLLFIKCFHWL. The Lumenal portion of the chain corresponds to 121-144; it reads ADDRVDMMERSPVITLRFHLRMMT. Residues 145-165 form a helical membrane-spanning segment; it reads VLAALGFADSYFVSSAYFTTI. The Cytoplasmic segment spans residues 166–170; sequence TRGAS. The helical transmembrane segment at 171 to 191 threads the bilayer; that stretch reads AQIVFGFEYAILLALVLHVTI. Over 192-215 the chain is Lumenal; the sequence is KYLLHMHDLRNPQSWDNKAVYLLY. The helical transmembrane segment at 216 to 236 threads the bilayer; sequence AELFINLIRCLLYGFFAVVML. Residues 237–610 are Cytoplasmic-facing; sequence RVHTFPLFSV…ARLLGENANQ (374 aa). The RING-type; atypical zinc-finger motif lies at 292–333; the sequence is CIICREEMTVDASPKRLPCSHVFHAHCLRSWFQRQQTCPTCR. Disordered regions lie at residues 386–408, 452–480, and 521–610; these read QPAG…GPFP, VNTT…LRRM, and RPVV…NANQ. The segment covering 452–474 has biased composition (polar residues); that stretch reads VNTTQGTSSETPPVNPSYSQLST. Residues 560 to 589 show a composition bias toward low complexity; that stretch reads TESPSTSSTAPSTSSPVTASSTPTTSSTRT.

It belongs to the HRD1 family. In terms of assembly, homodimer.

It localises to the endoplasmic reticulum membrane. The enzyme catalyses S-ubiquitinyl-[E2 ubiquitin-conjugating enzyme]-L-cysteine + [acceptor protein]-L-lysine = [E2 ubiquitin-conjugating enzyme]-L-cysteine + N(6)-ubiquitinyl-[acceptor protein]-L-lysine.. Its pathway is protein modification; protein ubiquitination. In terms of biological role, acts as an E3 ubiquitin-protein ligase which accepts ubiquitin specifically from endoplasmic reticulum-associated ubc-7 E2 ligase and transfers it to substrates, promoting their degradation. Component of the endoplasmic reticulum quality control (ERQC) system, which is also called the ER-associated degradation (ERAD) system, involved in ubiquitin-dependent degradation of misfolded endoplasmic reticulum proteins. Also promotes the degradation of normal but naturally short-lived proteins. Protects cells from ER stress-induced apoptosis. Thought to play a role together with hsp-3 in developmental growth and function of intestinal cells and to play a role together with hsp-4 in gonad formation. Plays a key role in the degradation of the potassium channel slo-1, perhaps acting directly, in targeting slo-1 to the ER-associated degradation pathway (ERAD), and also indirectly, via activation of the transcription factor skn-1, which mediates proteasomal homeostasis. In Caenorhabditis elegans, this protein is E3 ubiquitin-protein ligase hrd-1 (sel-11).